The primary structure comprises 355 residues: Serum paraoxonase/arylesterase 1 (355 aa).

The cysteines at positions 42 and 353 are disulfide-linked. Ca(2+) is bound by residues Glu53 and Asp54. The active-site Proton acceptor is His115. Positions 117, 168, 169, and 224 each coordinate Ca(2+). Residue Asn253 is glycosylated (N-linked (GlcNAc...) asparagine). Positions 269 and 270 each coordinate Ca(2+). Residues Asn270 and Asn324 are each glycosylated (N-linked (GlcNAc...) asparagine).

This sequence belongs to the paraoxonase family. Homodimer. Interacts with CLU. The cofactor is Ca(2+). In terms of processing, the signal sequence is not cleaved. As to expression, plasma, liver, kidney, heart, brain, small intestine and lung. In the plasma, associated with HDL.

Its subcellular location is the secreted. The protein localises to the extracellular space. It carries out the reaction a phenyl acetate + H2O = a phenol + acetate + H(+). It catalyses the reaction An aryl dialkyl phosphate + H2O = dialkyl phosphate + an aryl alcohol.. The enzyme catalyses an N-acyl-L-homoserine lactone + H2O = an N-acyl-L-homoserine + H(+). Functionally, hydrolyzes the toxic metabolites of a variety of organophosphorus insecticides. Capable of hydrolyzing a broad spectrum of organophosphate substrates and lactones, and a number of aromatic carboxylic acid esters. Mediates an enzymatic protection of low density lipoproteins against oxidative modification. The chain is Serum paraoxonase/arylesterase 1 (Pon1) from Mus musculus (Mouse).